A 221-amino-acid chain; its full sequence is MMRWNFSPEDLSSIFRNNSTLPKITVKNVDIEFTIPTAVTIEVEPSPVQQDNPPISSEQADFSLAQPDSPSLPLESPEESESSAQQEATAQTPNPPKEVEPSPVQQEFPAEPTEPAKEVEPSATQQEASGHPLKSTKEVNPPPKQEIPAQPSEPPEKVELSPVLQQAPTQLLEPLKKVECSPVQQAVPAQSSEPSIVVEPSPVQQIAHLCLQSSLRKWNPL.

A disordered region spans residues Thr-40 to Pro-162. Over residues Pro-47–Ala-60 the composition is skewed to polar residues. Positions Ser-82–Thr-92 are enriched in low complexity.

This is an uncharacterized protein from Homo sapiens (Human).